The following is a 557-amino-acid chain: 2-isopropylmalate synthase (557 aa).

Residues 33–307 enclose the Pyruvate carboxyltransferase domain; the sequence is PLWLSTDLRD…DPGLDFSDID (275 aa). Residues Asp-42, His-246, His-248, and Asn-282 each contribute to the Mg(2+) site. The regulatory domain stretch occupies residues 439-557; the sequence is AETPYALKGH…LGQQASIRAA (119 aa).

Belongs to the alpha-IPM synthase/homocitrate synthase family. LeuA type 2 subfamily. In terms of assembly, homodimer. Mg(2+) serves as cofactor.

The protein resides in the cytoplasm. It carries out the reaction 3-methyl-2-oxobutanoate + acetyl-CoA + H2O = (2S)-2-isopropylmalate + CoA + H(+). It functions in the pathway amino-acid biosynthesis; L-leucine biosynthesis; L-leucine from 3-methyl-2-oxobutanoate: step 1/4. In terms of biological role, catalyzes the condensation of the acetyl group of acetyl-CoA with 3-methyl-2-oxobutanoate (2-ketoisovalerate) to form 3-carboxy-3-hydroxy-4-methylpentanoate (2-isopropylmalate). The chain is 2-isopropylmalate synthase from Azotobacter vinelandii (strain DJ / ATCC BAA-1303).